Consider the following 565-residue polypeptide: NAD-dependent malic enzyme (565 aa).

The active-site Proton donor is the tyrosine 104. An NAD(+)-binding site is contributed by arginine 157. The active-site Proton acceptor is lysine 175. Residues glutamate 246, aspartate 247, and aspartate 270 each coordinate a divalent metal cation. The NAD(+) site is built by aspartate 270 and asparagine 418.

It belongs to the malic enzymes family. Homotetramer. The cofactor is Mg(2+). It depends on Mn(2+) as a cofactor.

The catalysed reaction is (S)-malate + NAD(+) = pyruvate + CO2 + NADH. It catalyses the reaction oxaloacetate + H(+) = pyruvate + CO2. The sequence is that of NAD-dependent malic enzyme from Escherichia coli O9:H4 (strain HS).